The following is a 504-amino-acid chain: Nuclear hormone receptor family member nhr-80 (504 aa).

A DNA-binding region (nuclear receptor) is located at residues 27 to 103; sequence STRCLICSAQ…NGMKPGGVQP (77 aa). 2 consecutive NR C4-type zinc fingers follow at residues 30–50 and 66–86; these read CLIC…CSAC and CITG…CRSC. A compositionally biased stretch (low complexity) spans 177–192; sequence SSSTSFSASTTTNYST. The disordered stretch occupies residues 177 to 199; it reads SSSTSFSASTTTNYSTPGPSPMA. The region spanning 214–466 is the NR LBD domain; sequence EEMKLGERRR…KLVLQLLNLD (253 aa). The interval 455–466 is AF-2; that stretch reads LDKLVLQLLNLD.

This sequence belongs to the nuclear hormone receptor family. As to quaternary structure, interacts with nuclear hormone receptor nhr-49; the interaction is direct. In terms of tissue distribution, expressed in the intestine and in some head and tail neurons, as well as the ventral nerve cord.

It is found in the nucleus. Functionally, transcription factor. Binds to regulatory elements and regulates transcription of target genes, including acyltransferase dgat-2. As part of a lysosome-to-nucleus retrograde lipid signaling pathway, acts as a direct nuclear receptor of oleoylethanolamide (OEA) and, acting in concert with nuclear hormone receptor nhr-49, activates the transcription of genes promoting longevity and mitochondrial beta-oxidation. Required to modulate expression of delta-9 fatty acid desaturases, thereby regulating lipid metabolism; in some contexts, acting in concert with nhr-49. Involved in modulation of lipid metabolism in response to the citrate-induced mitochondrial unfolded protein response (mtUPR), acting downstream of transcription factor dve-1 and ubiquitin-like protein 5. Plays a role in modulating mitochondrial morphology and function. Involved in positively modulating life-span in a germline-dependent manner, acting in concert with nuclear hormone receptor daf-12. Plays a role in transgenerational lipid accumulation in response to a high-fat diet. The sequence is that of Nuclear hormone receptor family member nhr-80 from Caenorhabditis elegans.